The chain runs to 932 residues: Protocadherin gamma-A7 (932 aa).

A signal peptide spans 1–28; that stretch reads MAAQPRGGDYRGFFLLSILLGTPWEAWA. Cadherin domains are found at residues 29 to 133, 134 to 242, 243 to 347, 348 to 452, 453 to 562, and 570 to 682; these read GRIL…VPRF, LTEE…TPVF, SLPQ…APEV, TMTS…PPTF, PHSS…PPEI, and DGST…EPSD. At 29–692 the chain is on the extracellular side; the sequence is GRILYSVSEE…GPYNYDLTLY (664 aa). Residues asparagine 419 and asparagine 545 are each glycosylated (N-linked (GlcNAc...) asparagine). Residues 693–713 form a helical membrane-spanning segment; the sequence is LVVAVATVSCVFLAFVLVLLA. Residues 714-932 are Cytoplasmic-facing; sequence LRLRRWHKSR…KKKSGKKEKK (219 aa). 2 disordered regions span residues 805–841 and 902–932; these read PSIQ…WPNN and ATLT…KEKK. The segment covering 922–932 has biased composition (basic residues); it reads NKKKSGKKEKK.

The protein resides in the cell membrane. Potential calcium-dependent cell-adhesion protein. May be involved in the establishment and maintenance of specific neuronal connections in the brain. The protein is Protocadherin gamma-A7 (PCDHGA7) of Homo sapiens (Human).